The primary structure comprises 403 residues: GPI-N-acetylgalactosamine transferase PGAP4 (403 aa).

Topologically, residues 1 to 22 are cytoplasmic; that stretch reads MSTSTSPAAMLLRRLRRLSWGS. A helical membrane pass occupies residues 23 to 43; it reads TAVQLFILTVVTFGLLAPLAC. The Lumenal portion of the chain corresponds to 44 to 259; sequence HRLLHSYFYL…RLQHYINPEP (216 aa). Asn-87 carries N-linked (GalNAc...) asparagine glycosylation. UDP-N-acetyl-alpha-D-galactosamine is bound at residue Val-109. 2 disulfides stabilise this stretch: Cys-132–Cys-136 and Cys-144–Cys-194. The short motif at 211–213 is the DXD motif element; it reads EDD. Residues 260–280 form a helical membrane-spanning segment; the sequence is MRILEWVGVGMLLGPLLTWIY. The Cytoplasmic portion of the chain corresponds to 281–287; the sequence is MRFASRP. The helical transmembrane segment at 288–308 threads the bilayer; that stretch reads GFSWPVMLFFSLYSMGLVELV. Topologically, residues 309-403 are lumenal; the sequence is GRHYFLELRR…LRYNFHPSLL (95 aa). Cys-332 and Cys-333 are joined by a disulfide. UDP-N-acetyl-alpha-D-galactosamine-binding residues include Thr-334, Pro-335, and Lys-362.

The protein belongs to the PGAP4 family. Glycosylated.

The protein resides in the golgi apparatus membrane. Golgi-resident glycosylphosphatidylinositol (GPI)-N-acetylgalactosamine transferase that catalyzes the N-acetyl-beta-D-galactosamine transfer from an UDP-N-acetyl-alpha-D-galactosamine to the 4-OH-position of the first mannose of the glycosylphosphatidylinositol (GPI) of a GPI-anchored protein (GPI-AP). This modification occurs after the fatty acid remodeling step of the GPI-anchor maturation. The chain is GPI-N-acetylgalactosamine transferase PGAP4 from Homo sapiens (Human).